The chain runs to 1073 residues: Semaphorin-6D (1073 aa).

The N-terminal stretch at 1–20 (MGFLLLWFCVLFLLVSRLRA) is a signal peptide. Topologically, residues 21–662 (VSFPEDDEPL…GESNQMVHMN (642 aa)) are extracellular. A Sema domain is found at 27–512 (DEPLNTVDYH…FSSCVVRIPL (486 aa)). Residue N51 is glycosylated (N-linked (GlcNAc...) asparagine). Cystine bridges form between C108–C118, C136–C145, C259–C370, and C284–C329. Residue N283 is glycosylated (N-linked (GlcNAc...) asparagine). N-linked (GlcNAc...) asparagine glycosylation is found at N435 and N461. 4 disulfides stabilise this stretch: C477–C506, C515–C533, C521–C568, and C525–C541. A PSI domain is found at 514-569 (RCERYGSCKKSCIASRDPYCGWLSQGVCERVTLGMLPGGYEQDTEYGNTAHLGDCH). An N-linked (GlcNAc...) asparagine glycan is attached at N631. A helical transmembrane segment spans residues 663 to 683 (VLITCVFAAFVLGAFIAGVAV). Residues 684–1073 (YCYRDMFVRK…SVRPLNKYTY (390 aa)) are Cytoplasmic-facing. A phosphoserine mark is found at S723, S734, and S744. Disordered stretches follow at residues 745 to 825 (RKEL…GHIP), 839 to 876 (TSFSNSNAHKAEKKLQSMDHPLTKSSSKREHRRSVDSR), 919 to 986 (PPKV…SPNG), and 1021 to 1073 (LQPS…KYTY). T773 bears the Phosphothreonine mark. Positions 790–806 (SHSEKAHSHGASRKEHP) are enriched in basic and acidic residues. S931, S957, and S983 each carry phosphoserine. The segment covering 931 to 942 (SPPSTLPRNSPT) has biased composition (polar residues). Composition is skewed to polar residues over residues 1021 to 1037 (LQPSLSRQSSYTSNGTL) and 1059 to 1073 (VPQTTSVRPLNKYTY).

Belongs to the semaphorin family. In terms of tissue distribution, expressed in brain and lung.

The protein localises to the cell membrane. Shows growth cone collapsing activity on dorsal root ganglion (DRG) neurons in vitro. May be a stop signal for the DRG neurons in their target areas, and possibly also for other neurons. May also be involved in the maintenance and remodeling of neuronal connections. Ligand of TREM2 with PLXNA1 as coreceptor in dendritic cells, plays a role in the generation of immune responses and skeletal homeostasis. This chain is Semaphorin-6D (Sema6d), found in Mus musculus (Mouse).